The following is a 541-amino-acid chain: Chaperonin GroEL (541 aa).

ATP contacts are provided by residues 29–32, 86–90, glycine 413, 477–479, and aspartate 493; these read TLGP, DGTTT, and DAL.

The protein belongs to the chaperonin (HSP60) family. In terms of assembly, forms a cylinder of 14 subunits composed of two heptameric rings stacked back-to-back. Interacts with the co-chaperonin GroES.

It localises to the cytoplasm. The catalysed reaction is ATP + H2O + a folded polypeptide = ADP + phosphate + an unfolded polypeptide.. Functionally, together with its co-chaperonin GroES, plays an essential role in assisting protein folding. The GroEL-GroES system forms a nano-cage that allows encapsulation of the non-native substrate proteins and provides a physical environment optimized to promote and accelerate protein folding. The chain is Chaperonin GroEL from Clostridium beijerinckii (strain ATCC 51743 / NCIMB 8052) (Clostridium acetobutylicum).